The chain runs to 551 residues: Probable glucomannan 4-beta-mannosyltransferase 3 (551 aa).

Residues 60 to 80 (ACLALSAMLLADAVLMAAACF) form a helical membrane-spanning segment. D154 is an active-site residue. Positions 213 and 215 each coordinate substrate. D307 is an active-site residue. The next 4 membrane-spanning stretches (helical) occupy residues 386 to 406 (VVAH…SVLI), 409 to 429 (VTVP…LHAI), 504 to 524 (ILFS…GGDY), and 525 to 545 (YFVY…GFCG).

Belongs to the glycosyltransferase 2 family. Plant cellulose synthase-like A subfamily.

It is found in the golgi apparatus membrane. It catalyses the reaction GDP-mannose + (glucomannan)n = GDP + (glucomannan)n+1.. In terms of biological role, probable mannan synthase which consists of a 4-beta-mannosyltransferase activity on mannan using GDP-mannose. The beta-1,4-mannan product is the backbone for galactomannan synthesis by galactomannan galactosyltransferase. Galactomannan is a noncellulosic polysaccharides of plant cell wall. In Oryza sativa subsp. japonica (Rice), this protein is Probable glucomannan 4-beta-mannosyltransferase 3.